The primary structure comprises 553 residues: Glycerol-3-phosphate dehydrogenase (553 aa).

13 to 41 lines the FAD pocket; the sequence is DLIVIGGGINGVGTARDGALRGLKTLLIE.

Belongs to the FAD-dependent glycerol-3-phosphate dehydrogenase family. The cofactor is FAD.

It localises to the cytoplasm. The catalysed reaction is a quinone + sn-glycerol 3-phosphate = dihydroxyacetone phosphate + a quinol. In Synechocystis sp. (strain ATCC 27184 / PCC 6803 / Kazusa), this protein is Glycerol-3-phosphate dehydrogenase (glpD).